The sequence spans 997 residues: Glutamate [NMDA] receptor subunit 1 (997 aa).

An N-terminal signal peptide occupies residues 1–26 (MAVAGFVFCWPLLGLTIVLLVAPIDA). Topologically, residues 27 to 573 (AQRHTASDNP…TLVSFLQPFS (547 aa)) are extracellular. 7 N-linked (GlcNAc...) asparagine glycosylation sites follow: asparagine 258, asparagine 314, asparagine 345, asparagine 397, asparagine 454, asparagine 481, and asparagine 501. Residues 530 to 532 (PLT) and arginine 537 each bind glycine. A helical membrane pass occupies residues 574-594 (NTLWILVMVSVHVVALVLYLL). Residues 595–651 (DRFSPFGRFKLSHSDSNEEKALNLSSAVWFAWGVLLNSGIGEGTPRSFSARVLGMVW) are Cytoplasmic-facing. The helical transmembrane segment at 652-672 (AGFAMIIVASYTANLAAFLVL) threads the bilayer. Topologically, residues 673-831 (ERPKTKLSGI…KTPNTLGLKN (159 aa)) are extracellular. An N-linked (GlcNAc...) asparagine glycan is attached at asparagine 693. Glycine is bound by residues serine 703 and aspartate 747. A helical membrane pass occupies residues 832-852 (MAGVFILVGVGIAGGVGLIII). Residues 853-997 (EVIYKKHQVK…YTSDVSHLVV (145 aa)) lie on the Cytoplasmic side of the membrane. The interval 970 to 997 (LGKTRPQQSVLPPRYSPGYTSDVSHLVV) is disordered. Positions 987 to 997 (GYTSDVSHLVV) are enriched in polar residues.

The protein belongs to the glutamate-gated ion channel (TC 1.A.10.1) family. Forms a heteromeric NMDA channel with Nmdar2.

The protein resides in the cell membrane. It is found in the postsynaptic cell membrane. Its subcellular location is the postsynaptic density. NMDA receptor subtype of glutamate-gated ion channels with high calcium permeability and voltage-dependent sensitivity to magnesium. Mediated by glycine. This protein plays a key role in synaptic plasticity, synaptogenesis, excitotoxicity, memory acquisition and learning. It mediates neuronal functions in glutamate neurotransmission. Is involved in the cell surface targeting of NMDA receptors. Plays a role in associative learning and in long-term memory consolidation. This chain is Glutamate [NMDA] receptor subunit 1, found in Drosophila yakuba (Fruit fly).